Reading from the N-terminus, the 511-residue chain is Immunoglobulin-binding protein EibD (511 aa).

The signal sequence occupies residues 1–26; sequence MSKKFTMTLLSSSLAGLLVMSGGVSA. A surface exposed passenger domain region spans residues 27-417; it reads QNGTYSVLQD…SKAIAANTRT (391 aa). The Extracellular segment spans residues 27–460; it reads QNGTYSVLQD…GLFQPYSVGK (434 aa). The interval 161–287 is head domain; that stretch reads DAKASGEFSV…TGTESDKTYG (127 aa). The segment at 288–303 is neck; the sequence is TRVLGGLSDGTRNSDA. Residues 304-349 are right-handed coiled-coil (RHcc); sequence ATVGQLNRKVGGVYDDVKARITVESEKQKKYTDQKTSEVNEKVEAR. Residues 304-349 adopt a coiled-coil conformation; sequence ATVGQLNRKVGGVYDDVKARITVESEKQKKYTDQKTSEVNEKVEAR. A required to bind IgA region spans residues 329-344; the sequence is EKQKKYTDQKTSEVNE. Positions 350–375 are saddle domain; sequence TTVGVDSDGKLTRAEGATKTIAVNDG. Residues 376 to 441 are a coiled coil; it reads LVALSGRTDR…INENHKEMKR (66 aa). Positions 376–441 are left-handed coiled-coil (LHcc); it reads LVALSGRTDR…INENHKEMKR (66 aa). A required to bind IgG region spans residues 384–418; it reads DRIDYAVGAIDGRVTRNTQSIEKNSKAIAANTRTL. Residues 418–460 are outer membrane translocation of the passenger domain; it reads LQQHSARLDSQQRQINENHKEMKRAAAQSAALTGLFQPYSVGK. Beta stranded transmembrane passes span 461 to 471, 474 to 485, 488 to 497, and 501 to 511; these read FNATAAVGGYS, QALAVGVGYRFN, TAAKAGVAFS, and ASWNVGVNFEF. The interval 461–511 is translocator domain; it reads FNATAAVGGYSDQQALAVGVGYRFNEQTAAKAGVAFSDGDASWNVGVNFEF.

It belongs to the autotransporter-2 (AT-2) (TC 1.B.40) family. Eib subfamily. In terms of assembly, homotrimer; can probably form mixed heterotrimers in vivo. Will form mixed heterotrimers with EibA or EibC; these are correctly located in the outer membrane and bind IgG Fc, although less well than homotrimers. In denaturing gels runs as a band of about 210 kDa. Binds the Fc portion of immunoglobulins; binds more than 1 Fc per subunit, can be modeled to bind 3 Fc per trimer.

Its subcellular location is the cell surface. It is found in the cell outer membrane. Functionally, binds (in a non-immune fashion) to the Fc portion of human IgA and IgG; binding occurs on the cell surface. Confers the ability to survive exposure to human serum exposure. Binds to the Fc portion of human IgG, IgA and to whole mouse antibodies also via Fc. Upon overexpression cells acquire an extra cell surface layer that forms a zipper-like contact between cells; cells autoagglutinate and form biofilm more readily, suggesting it may play a role in defense against a host. The chain is Immunoglobulin-binding protein EibD from Escherichia coli.